Consider the following 90-residue polypeptide: Progonadoliberin-3 (90 aa).

Positions 1-23 are cleaved as a signal peptide; that stretch reads MEAGSRVIMQVLLLALVVQVTLS. Pyrrolidone carboxylic acid is present on Gln-24. Glycine amide is present on Gly-33.

This sequence belongs to the GnRH family. Expressed only in the terminal nerve nucleus of the telencephalon.

The protein resides in the secreted. In terms of biological role, stimulates the secretion of gonadotropins. The chain is Progonadoliberin-3 (gnrh3) from Haplochromis burtoni (Burton's mouthbrooder).